Here is a 154-residue protein sequence, read N- to C-terminus: 3-hydroxyacyl-[acyl-carrier-protein] dehydratase FabZ (154 aa).

The active site involves His-58.

The protein belongs to the thioester dehydratase family. FabZ subfamily.

Its subcellular location is the cytoplasm. The enzyme catalyses a (3R)-hydroxyacyl-[ACP] = a (2E)-enoyl-[ACP] + H2O. Involved in unsaturated fatty acids biosynthesis. Catalyzes the dehydration of short chain beta-hydroxyacyl-ACPs and long chain saturated and unsaturated beta-hydroxyacyl-ACPs. This is 3-hydroxyacyl-[acyl-carrier-protein] dehydratase FabZ from Protochlamydia amoebophila (strain UWE25).